A 254-amino-acid chain; its full sequence is Vitamin B12 import ATP-binding protein BtuD (254 aa).

The 239-residue stretch at 1-239 folds into the ABC transporter domain; the sequence is MHINHISVGN…ENLQQVFETP (239 aa). 29–36 contacts ATP; sequence GPNGSGKS.

It belongs to the ABC transporter superfamily. Vitamin B12 importer (TC 3.A.1.13.1) family. As to quaternary structure, the complex is composed of two ATP-binding proteins (BtuD), two transmembrane proteins (BtuC) and a solute-binding protein (BtuF).

It is found in the cell inner membrane. The enzyme catalyses an R-cob(III)alamin(out) + ATP + H2O = an R-cob(III)alamin(in) + ADP + phosphate + H(+). In terms of biological role, part of the ABC transporter complex BtuCDF involved in vitamin B12 import. Responsible for energy coupling to the transport system. This chain is Vitamin B12 import ATP-binding protein BtuD, found in Vibrio vulnificus (strain YJ016).